The primary structure comprises 1738 residues: Complement C4-B (1738 aa).

The first 19 residues, methionine 1–glutamine 19, serve as a signal peptide directing secretion. Residues cysteine 66 and cysteine 95 are joined by a disulfide bond. A glycan (N-linked (GlcNAc...) asparagine) is linked at asparagine 224. A disulfide bond links cysteine 633 and cysteine 667. The propeptide occupies arginine 674 to arginine 677. 3 disulfide bridges follow: cysteine 700/cysteine 726, cysteine 701/cysteine 733, and cysteine 714/cysteine 734. The 35-residue stretch at cysteine 700–cysteine 734 folds into the Anaphylatoxin-like domain. Residue asparagine 743 is glycosylated (N-linked (GlcNAc...) asparagine). The isoglutamyl cysteine thioester (Cys-Gln) cross-link spans cysteine 1006–glutamine 1009. Residues asparagine 1324 and asparagine 1387 are each glycosylated (N-linked (GlcNAc...) asparagine). 3 positions are modified to sulfotyrosine: tyrosine 1413, tyrosine 1416, and tyrosine 1417. A propeptide spanning residues arginine 1444–arginine 1447 is cleaved from the precursor. Intrachain disulfides connect cysteine 1465–cysteine 1529, cysteine 1577–cysteine 1582, cysteine 1589–cysteine 1667, cysteine 1612–cysteine 1736, and cysteine 1712–cysteine 1721. An NTR domain is found at cysteine 1589–cysteine 1736.

In terms of assembly, in absence of complement activation, circulates in blood as a disulfide-linked trimer of an alpha, beta and gamma chain. As to quaternary structure, complement C4b is composed of complement C4b-A, complement C4 beta and complement C4 gamma chains that are associated via disulfide bonds. Non-enzymatic component of the C3 convertase, also named C4bC2b, composed of the serine protease complement C2b (C2), as well as complement C4b. Non-enzymatic component of the C5 convertase, also named C4bC2bC3b, composed of the serine protease complement C2b (C2), complement C3b, as well as complement C4b. In terms of processing, prior to secretion, the single-chain precursor is enzymatically cleaved by plasminogen (PLG) to yield non-identical chains alpha, beta and gamma. During activation of the complement systems, the alpha chain is cleaved into C4a and C4b by different proteases depending on the complement pathway: C4b stays linked to the beta and gamma chains, while C4a is released in the plasma. The alpha chain is cleaved by C1S to generate C4a and C4b following activation by the classical complement system. The alpha chain is cleaved to generate C4a and C4b by MASP2 following activation by the lectin complement system. The alpha chain is cleaved by GZMK to generate C4a and C4b following activation by the GZMK complement system. Further degradation of C4b by C1 into the inactive fragments C4c and C4d blocks the generation of C3 convertase. The proteolytic cleavages often are incomplete so that many structural forms can be found in plasma. Post-translationally, upon activation, the internal thioester bond reacts with carbohydrate antigens on the target surface to form amide or ester bonds, leading to covalent association with the surface of pathogens. Complement C4b interacts with complement C3b via a thioester linkage.

Its subcellular location is the secreted. It localises to the cell surface. Precursor of non-enzymatic components of the classical, lectin and GZMK complement pathways, which consist in a cascade of proteins that leads to phagocytosis and breakdown of pathogens and signaling that strengthens the adaptive immune system. Functionally, non-enzymatic component of C3 and C5 convertases. Generated following cleavage by complement proteases (C1S, MASP2 or GZMK, depending on the complement pathway), it covalently attaches to the surface of pathogens, where it acts as an opsonin that marks the surface of antigens for removal. It then recruits the serine protease complement C2b to form the C3 and C5 convertases, which cleave and activate C3 and C5, respectively, the next components of the complement pathways. Complement C4b-A isotype is responsible for effective binding to form amide bonds with immune aggregates or protein antigens, while complement C4b-B isotype catalyzes the transacylation of the thioester carbonyl group to form ester bonds with carbohydrate antigens. In terms of biological role, putative humoral mediator released following cleavage by complement proteases (C1S, MASP2 or GZMK, depending on the complement pathway). While it is strongly similar to anaphylatoxins, its role is unclear. Was reported to act as a mediator of local inflammatory process; however these effects were probably due to contamination with C3a and/C5a anaphylatoxins in biological assays. The polypeptide is Complement C4-B (Mus musculus (Mouse)).